The chain runs to 403 residues: Tyrosine--tRNA ligase (403 aa).

The 'HIGH' region signature appears at 42–51; sequence PTAPDLHLGH. A 'KMSKS' region motif is present at residues 226-230; that stretch reads KMSKS. Position 229 (lysine 229) interacts with ATP. An S4 RNA-binding domain is found at 336 to 396; that stretch reads MPISAVLNKA…GKKAFGRVTL (61 aa).

The protein belongs to the class-I aminoacyl-tRNA synthetase family. TyrS type 2 subfamily. In terms of assembly, homodimer.

It is found in the cytoplasm. It carries out the reaction tRNA(Tyr) + L-tyrosine + ATP = L-tyrosyl-tRNA(Tyr) + AMP + diphosphate + H(+). Functionally, catalyzes the attachment of tyrosine to tRNA(Tyr) in a two-step reaction: tyrosine is first activated by ATP to form Tyr-AMP and then transferred to the acceptor end of tRNA(Tyr). This is Tyrosine--tRNA ligase from Pseudomonas syringae pv. syringae (strain B728a).